Consider the following 327-residue polypeptide: N-acetyl-gamma-glutamyl-phosphate reductase (327 aa).

Cys136 is a catalytic residue.

This sequence belongs to the NAGSA dehydrogenase family. Type 1 subfamily.

Its subcellular location is the cytoplasm. It catalyses the reaction N-acetyl-L-glutamate 5-semialdehyde + phosphate + NADP(+) = N-acetyl-L-glutamyl 5-phosphate + NADPH + H(+). Its pathway is amino-acid biosynthesis; L-arginine biosynthesis; N(2)-acetyl-L-ornithine from L-glutamate: step 3/4. In terms of biological role, catalyzes the NADPH-dependent reduction of N-acetyl-5-glutamyl phosphate to yield N-acetyl-L-glutamate 5-semialdehyde. The polypeptide is N-acetyl-gamma-glutamyl-phosphate reductase (Xylella fastidiosa (strain M23)).